The following is a 270-amino-acid chain: Urease accessory protein UreD (270 aa).

It belongs to the UreD family. As to quaternary structure, ureD, UreF and UreG form a complex that acts as a GTP-hydrolysis-dependent molecular chaperone, activating the urease apoprotein by helping to assemble the nickel containing metallocenter of UreC. The UreE protein probably delivers the nickel.

The protein resides in the cytoplasm. Its function is as follows. Required for maturation of urease via the functional incorporation of the urease nickel metallocenter. This is Urease accessory protein UreD from Beijerinckia indica subsp. indica (strain ATCC 9039 / DSM 1715 / NCIMB 8712).